Here is a 461-residue protein sequence, read N- to C-terminus: MVNDRWKTMGGAAQLEDRPRDKPQRPSCGYVLCTVLLALAVLLAVAVTGAVLFLNHAHAPGTAPPPVVSTGAASANSALVTVERADSSHLSILIDPRCPDLTDSFARLESAQASVLQALTEHQAQPRLVGDQEQELLDTLADQLPRLLARASELQTECMGLRKGHGTLGQGLSALQSEQGRLIQLLSESQGHMAHLVNSVSDILDALQRDRGLGRPRNKADLQRAPARGTRPRGCATGSRPRDCLDVLLSGQQDDGVYSVFPTHYPAGFQVYCDMRTDGGGWTVFQRREDGSVNFFRGWDAYRDGFGRLTGEHWLGLKRIHALTTQAAYELHVDLEDFENGTAYARYGSFGVGLFSVDPEEDGYPLTVADYSGTAGDSLLKHSGMRFTTKDRDSDHSENNCAAFYRGAWWYRNCHTSNLNGQYLRGAHASYADGVEWSSWTGWQYSLKFSEMKIRPVREDR.

The tract at residues 1-24 (MVNDRWKTMGGAAQLEDRPRDKPQ) is disordered. At 1-33 (MVNDRWKTMGGAAQLEDRPRDKPQRPSCGYVLC) the chain is on the cytoplasmic side. Residues 15–24 (LEDRPRDKPQ) are compositionally biased toward basic and acidic residues. A helical; Signal-anchor for type II membrane protein transmembrane segment spans residues 34–54 (TVLLALAVLLAVAVTGAVLFL). Residues 55 to 461 (NHAHAPGTAP…MKIRPVREDR (407 aa)) lie on the Extracellular side of the membrane. Residues 214-238 (GRPRNKADLQRAPARGTRPRGCATG) are disordered. The Fibrinogen C-terminal domain occupies 235–458 (CATGSRPRDC…FSEMKIRPVR (224 aa)). A disulfide bond links cysteine 244 and cysteine 273. Asparagine 340 is a glycosylation site (N-linked (GlcNAc...) asparagine). Residues aspartate 393 and aspartate 395 each contribute to the Ca(2+) site. An intrachain disulfide couples cysteine 401 to cysteine 414.

Homotetramer; disulfide-linked. As to expression, expressed in the small and large intestinal epithelial cells with a highly polarized localization to the apical surface corresponding to the brush border and in the ducts of the salivary gland.

The protein localises to the membrane. In terms of biological role, acetyl group-binding receptor which shows a high-affinity and calcium-dependent binding to acetylated structures such as chitin, some N-acetylated carbohydrates, and amino acids, but not to their non-acetylated counterparts. Can facilitate the endocytosis of acetylated components. The sequence is that of Fibrinogen C domain-containing protein 1 (FIBCD1) from Homo sapiens (Human).